The primary structure comprises 137 residues: Peptide methionine sulfoxide reductase MsrB (137 aa).

A MsrB domain is found at 7–129; sequence AEELKKKLSE…NSASLAFSDE (123 aa). The Zn(2+) site is built by cysteine 46, cysteine 49, cysteine 95, and cysteine 98. The active-site Nucleophile is cysteine 118.

It belongs to the MsrB Met sulfoxide reductase family. Zn(2+) serves as cofactor.

It carries out the reaction L-methionyl-[protein] + [thioredoxin]-disulfide + H2O = L-methionyl-(R)-S-oxide-[protein] + [thioredoxin]-dithiol. The polypeptide is Peptide methionine sulfoxide reductase MsrB (Salmonella dublin (strain CT_02021853)).